The primary structure comprises 270 residues: MAVITKIEVQKRSKERFNVYIDKGQGEEYGFSVNEVILIKHGLQKGLEIDEIALGNILYNEEVQKAYLQAISYLSYQMRTKLEIEDFLRKKEVGQAIISEVVSKLLHDRYINDKEYAILYTRTQSNVNRKGPTVIKRELLNKGVQDLIIMHSLQEYTKEKQIENALILIEKKKKSYQKHSFLQMKLKLDEMLVRKGYSRDVIQICLEELKDEKDDEKQQEALHYHGNKYYEKYKKYDGWTFENKMKQALYRKGFSIDEIEIFLQMKREEG.

It belongs to the RecX family.

The protein localises to the cytoplasm. In terms of biological role, modulates RecA activity. This is Regulatory protein RecX from Bacillus thuringiensis subsp. konkukian (strain 97-27).